A 450-amino-acid polypeptide reads, in one-letter code: MGKYFGTDGVRGVANSELTPELAFRLGRMGGYVLTRHVGEHPRVLVARDTRISGEMLESALIAGLVSVGIEVMRLGVISTPGVAYLTKAQGASASVMISASHNPVDDNGIKFFGSDGFKLSDDQEEEIEQLLDTAEDTLPRPSGEGLGTVSDYFEGKQKYIQYLKQTIENDFNGYHIALDCANGATSGLATHLFADLDADISSMGASPNGLNINDGVGSTHPEALAAFVLDKKADVGLAFDGDGDRVIAIDEIGQIVDGDKIMFICAKYLREQGLLNSNTIVSTVMSNLGFYKGLRELEIEDVQTAVGDRYVVEAMREGNYNLGGEQSGHIIFLDHNTTGDGLLSGIQLINVMKATGKKLSELASEMKTFPQKLENIRVSDKNHVTDNPKVSKVISEVEAEMAGNGRVLVRPSGTEPLVRVMVEAATKEATDEYCERISAVVRSEMALND.

The active-site Phosphoserine intermediate is the S101. Residues S101, D241, D243, and D245 each contribute to the Mg(2+) site. S101 carries the phosphoserine modification.

It belongs to the phosphohexose mutase family. Mg(2+) serves as cofactor. In terms of processing, activated by phosphorylation.

It catalyses the reaction alpha-D-glucosamine 1-phosphate = D-glucosamine 6-phosphate. Its function is as follows. Catalyzes the conversion of glucosamine-6-phosphate to glucosamine-1-phosphate. This chain is Phosphoglucosamine mutase, found in Listeria innocua serovar 6a (strain ATCC BAA-680 / CLIP 11262).